A 269-amino-acid polypeptide reads, in one-letter code: Formamidopyrimidine-DNA glycosylase (269 aa).

The Schiff-base intermediate with DNA role is filled by Pro-2. Glu-3 serves as the catalytic Proton donor. The active-site Proton donor; for beta-elimination activity is Lys-57. 3 residues coordinate DNA: His-90, Arg-109, and Lys-150. The FPG-type zinc finger occupies 235-269 (QVYGKGGKPCPRCDNPLSEMKIGQRASVFCSECQK). Arg-259 functions as the Proton donor; for delta-elimination activity in the catalytic mechanism.

Belongs to the FPG family. In terms of assembly, monomer. The cofactor is Zn(2+).

The enzyme catalyses Hydrolysis of DNA containing ring-opened 7-methylguanine residues, releasing 2,6-diamino-4-hydroxy-5-(N-methyl)formamidopyrimidine.. The catalysed reaction is 2'-deoxyribonucleotide-(2'-deoxyribose 5'-phosphate)-2'-deoxyribonucleotide-DNA = a 3'-end 2'-deoxyribonucleotide-(2,3-dehydro-2,3-deoxyribose 5'-phosphate)-DNA + a 5'-end 5'-phospho-2'-deoxyribonucleoside-DNA + H(+). Functionally, involved in base excision repair of DNA damaged by oxidation or by mutagenic agents. Acts as a DNA glycosylase that recognizes and removes damaged bases. Has a preference for oxidized purines, such as 7,8-dihydro-8-oxoguanine (8-oxoG). Has AP (apurinic/apyrimidinic) lyase activity and introduces nicks in the DNA strand. Cleaves the DNA backbone by beta-delta elimination to generate a single-strand break at the site of the removed base with both 3'- and 5'-phosphates. This Photobacterium profundum (strain SS9) protein is Formamidopyrimidine-DNA glycosylase.